A 313-amino-acid polypeptide reads, in one-letter code: Putative HTH-type transcriptional regulatory protein Msm_0453 (313 aa).

Residues 131-189 (IKQYREEYSLSLKDLADLAHVSRATMYKYENEIVRANTETAMILEEILNTKVTLDIDLL) form the HTH cro/C1-type domain. The segment at residues 142 to 161 (LKDLADLAHVSRATMYKYEN) is a DNA-binding region (H-T-H motif).

The sequence is that of Putative HTH-type transcriptional regulatory protein Msm_0453 from Methanobrevibacter smithii (strain ATCC 35061 / DSM 861 / OCM 144 / PS).